Consider the following 171-residue polypeptide: Translationally-controlled tumor protein homolog (171 aa).

In terms of domain architecture, TCTP spans 1-171 (MIIYRDCISQ…FKDGLEMEKC (171 aa)).

It belongs to the TCTP family. As to expression, expressed by the venom gland.

It localises to the secreted. Functionally, venom protein that causes edema, enhances vascular permeability and is likely related to the inflammatory activity of the venom. In Micrurus fulvius (Eastern coral snake), this protein is Translationally-controlled tumor protein homolog.